The chain runs to 344 residues: Methionine import ATP-binding protein MetN (344 aa).

The ABC transporter domain occupies 2-241 (IEIRNLSQRF…PHHEVTRALI (240 aa)). 38–45 (GRSGAGKS) serves as a coordination point for ATP.

Belongs to the ABC transporter superfamily. Methionine importer (TC 3.A.1.24) family. As to quaternary structure, the complex is composed of two ATP-binding proteins (MetN), two transmembrane proteins (MetI) and a solute-binding protein (MetQ).

It localises to the cell inner membrane. The catalysed reaction is L-methionine(out) + ATP + H2O = L-methionine(in) + ADP + phosphate + H(+). It catalyses the reaction D-methionine(out) + ATP + H2O = D-methionine(in) + ADP + phosphate + H(+). Part of the ABC transporter complex MetNIQ involved in methionine import. Responsible for energy coupling to the transport system. The chain is Methionine import ATP-binding protein MetN from Burkholderia thailandensis (strain ATCC 700388 / DSM 13276 / CCUG 48851 / CIP 106301 / E264).